The primary structure comprises 394 residues: Guanine nucleotide-binding protein G(s) subunit alpha isoforms short (394 aa).

The interval 1–23 is disordered; that stretch reads MGCLGNSKTEDQRNEEKAQREAN. Gly2 carries N-palmitoyl glycine lipidation. Cys3 carries S-palmitoyl cysteine lipidation. A compositionally biased stretch (basic and acidic residues) spans 8-23; sequence KTEDQRNEEKAQREAN. The region spanning 39–394 is the G-alpha domain; sequence ATHRLLLLGA…RMHLRQYELL (356 aa). The segment at 42 to 55 is G1 motif; the sequence is RLLLLGAGESGKST. 47–55 is a binding site for GTP; that stretch reads GAGESGKST. Mg(2+) is bound at residue Ser54. The disordered stretch occupies residues 68–91; the sequence is FNGEGGEEDPQAARSNSDGEKATK. The tract at residues 196–204 is G2 motif; that stretch reads DLLRCRVLT. GTP-binding positions include 197 to 204, 223 to 227, and 292 to 295; these read LLRCRVLT, DVGGQ, and NKQD. Thr204 is a Mg(2+) binding site. Residues 219-228 form a G3 motif region; that stretch reads FHMFDVGGQR. The segment at 288–295 is G4 motif; it reads ILFLNKQD. Residue Lys300 forms a Glycyl lysine isopeptide (Lys-Gly) (interchain with G-Cter in ubiquitin) linkage. At Ser352 the chain carries Phosphoserine. The interval 364-369 is G5 motif; the sequence is TCAVDT. Ala366 is a GTP binding site.

It belongs to the G-alpha family. G(s) subfamily. Heterotrimeric G proteins are composed of 3 units; alpha, beta and gamma. The alpha chain contains the guanine nucleotide binding site. Component of the TAS2R14-GNAS2 complex, consisting of TAS2R14, GNAS2, GNB1 and GNG2; within the complex interacts with TAS2R14; this complex plays a role in the perception of bitterness. Interacts with CRY1; the interaction may block GPCR-mediated regulation of cAMP concentrations. Interacts with ADCY6 and stimulates its adenylyl cyclase activity. Interacts with ADCY2 and ADCY5. Stimulates the ADCY5 adenylyl cyclase activity. Interacts (GDP-bound form) with RIC8B; promoting GNAS folding and association with the plasma membrane. Interaction with SASH1. Interacts with GASL2L2.

The protein localises to the cell membrane. It catalyses the reaction GTP + H2O = GDP + phosphate + H(+). In terms of biological role, guanine nucleotide-binding proteins (G proteins) function as transducers in numerous signaling pathways controlled by G protein-coupled receptors (GPCRs). The alpha chain contains the guanine nucleotide binding site and alternates between an active, GTP-bound state and an inactive, GDP-bound state. Signaling by an activated GPCR promotes GDP release and GTP binding. The alpha subunit has a low GTPase activity that converts bound GTP to GDP, thereby terminating the signal. Both GDP release and GTP hydrolysis are modulated by numerous regulatory proteins. Signaling involves the activation of adenylyl cyclases, resulting in increased levels of the signaling molecule cAMP. Functions downstream of beta-adrenergic receptors. Stimulates the Ras signaling pathway via RAPGEF2. In Bos taurus (Bovine), this protein is Guanine nucleotide-binding protein G(s) subunit alpha isoforms short (GNAS).